A 476-amino-acid polypeptide reads, in one-letter code: Protein transport protein Sec61 subunit alpha isoform A (476 aa).

The Cytoplasmic segment spans residues 2-33 (GIKFLEVIKPFCAVLPEIQKPERKIQFREKVL). The chain crosses the membrane as a helical span at residues 34–53 (WTAITLFIFLVCCQIPLFGI). Over 54-76 (MSSDSADPFYWMRVILASNRGTL) the chain is Lumenal. The chain crosses the membrane as a helical span at residues 77–96 (MELGISPIVTSGLIMQLLAG). Residues 97–117 (AKIIEVGDTPKDRALFNGAQK) lie on the Cytoplasmic side of the membrane. Residues 118 to 138 (LFGMIITIGQSIVYVMTGMYG) form a helical membrane-spanning segment. Topologically, residues 139–144 (DPSEMG) are lumenal. A helical transmembrane segment spans residues 145 to 165 (AGICLLIIIQLFVAGLIVLLL). Topologically, residues 166–172 (DELLQKG) are cytoplasmic. The chain crosses the membrane as a helical span at residues 173 to 193 (YGLGSGISLFIATNICETIVW). The Lumenal segment spans residues 194-240 (KAFSPTTVNTGRGTEFEGAIIALFHLLATRTDKVRALREAFYRQNLP). A helical membrane pass occupies residues 241–261 (NLLNLIATVFVFAVVIYFQGF). At 262-288 (RVDLPIKSARYRGQYNTYPIKLFYTSN) the chain is on the cytoplasmic side. A helical transmembrane segment spans residues 289–309 (IPIILQSALVSNLYVISQMLS). Over 310-354 (TRFSGNFLVNLLGTWSDTSTGGPARAYPVGGLCYFLSPPESFGSV) the chain is Lumenal. Residues 355–375 (LDDPIHAAIYIVFMLGSCAFF) form a helical membrane-spanning segment. The Cytoplasmic portion of the chain corresponds to 376–420 (SKTWIEVSGSSAKDVAKQLKEQQMVMGGHRETSMVHELNRYIPTA). The chain crosses the membrane as a helical span at residues 421–441 (AAFGGLCIGGLSVMADFLGAI). The Lumenal segment spans residues 442–445 (GSGT). Residues 446–462 (GILLAVTIIYQYFEIFV) form a helical membrane-spanning segment. At 463-476 (KEQSEMGSMGALLF) the chain is on the cytoplasmic side.

This sequence belongs to the SecY/SEC61-alpha family. The SEC61 channel-forming translocon complex consists of channel-forming core components SEC61A1, SEC61B and SEC61G and different auxiliary components such as SEC62 and SEC63. The SEC61 channel associates with the multi-pass translocon (MPT) complex.

The protein resides in the endoplasmic reticulum membrane. In terms of biological role, component of SEC61 channel-forming translocon complex that mediates transport of signal peptide-containing precursor polypeptides across the endoplasmic reticulum (ER). Forms a ribosome receptor and a gated pore in the ER membrane, both functions required for cotranslational translocation of nascent polypeptides. May cooperate with auxiliary protein SEC62, SEC63 and HSPA5/BiP to enable post-translational transport of small presecretory proteins. The SEC61 channel is also involved in ER membrane insertion of transmembrane proteins: it mediates membrane insertion of the first few transmembrane segments of proteins, while insertion of subsequent transmembrane regions of multi-pass membrane proteins is mediated by the multi-pass translocon (MPT) complex. The sequence is that of Protein transport protein Sec61 subunit alpha isoform A (sec61aa) from Oncorhynchus mykiss (Rainbow trout).